The following is an 83-amino-acid chain: Small ribosomal subunit protein bS20 (83 aa).

It belongs to the bacterial ribosomal protein bS20 family.

In terms of biological role, binds directly to 16S ribosomal RNA. This chain is Small ribosomal subunit protein bS20, found in Staphylococcus aureus (strain JH1).